We begin with the raw amino-acid sequence, 235 residues long: MKVIKVENQVQGGKVAFEILKEKLANGAQTLGLATGSSPLEFYKEIVESDLDFSNLTSVNLDEYVGLDGDNPQSYRYFMQENLFNQKPFKESFLPRGVKDNAEAEVERYNQILADHPVDLQILGIGRNGHIGFNEPGTPFDSQTHLVELDQSTIEANARFFAKIEDVPTQAISMGIKNILDAKSIILFAYGESKAEAIAGTVSGPVTENLPASSLQNHPDVTIIADAEALSLLEK.

Residue D62 is the Proton acceptor; for enolization step of the active site. Catalysis depends on N128, which acts as the For ring-opening step. H130 (proton acceptor; for ring-opening step) is an active-site residue. Catalysis depends on E135, which acts as the For ring-opening step.

It belongs to the glucosamine/galactosamine-6-phosphate isomerase family. NagB subfamily.

It carries out the reaction alpha-D-glucosamine 6-phosphate + H2O = beta-D-fructose 6-phosphate + NH4(+). Its pathway is amino-sugar metabolism; N-acetylneuraminate degradation; D-fructose 6-phosphate from N-acetylneuraminate: step 5/5. Functionally, catalyzes the reversible isomerization-deamination of glucosamine 6-phosphate (GlcN6P) to form fructose 6-phosphate (Fru6P) and ammonium ion. This Streptococcus pneumoniae (strain JJA) protein is Glucosamine-6-phosphate deaminase.